The chain runs to 433 residues: Tol-Pal system protein TolB (433 aa).

An N-terminal signal peptide occupies residues 1–21; sequence MRNLLRGMLVVICCMAGIAAA.

Belongs to the TolB family. In terms of assembly, the Tol-Pal system is composed of five core proteins: the inner membrane proteins TolA, TolQ and TolR, the periplasmic protein TolB and the outer membrane protein Pal. They form a network linking the inner and outer membranes and the peptidoglycan layer.

Its subcellular location is the periplasm. Functionally, part of the Tol-Pal system, which plays a role in outer membrane invagination during cell division and is important for maintaining outer membrane integrity. In Pseudomonas fluorescens (strain ATCC BAA-477 / NRRL B-23932 / Pf-5), this protein is Tol-Pal system protein TolB.